The following is a 429-amino-acid chain: Zinc-regulated GTPase metalloprotein activator 1 (429 aa).

The psi-PxLVp motif signature appears at Gly15 to Thr22. Residue Gly78–Ser85 coordinates GTP. Cys136, Cys138, and Cys139 together coordinate Zn(2+). Residues Cys136–Cys139 carry the CXCC motif motif. GTP is bound by residues Cys139 to Asn143 and Asn244 to Asp247. One can recognise a CobW C-terminal domain in the interval Arg362 to Leu428.

Belongs to the SIMIBI class G3E GTPase family. ZNG1 subfamily.

The catalysed reaction is GTP + H2O = GDP + phosphate + H(+). Its function is as follows. Zinc chaperone that directly transfers zinc cofactor to target metalloproteins, thereby activating them. Catalyzes zinc insertion into the active site of methionine aminopeptidase MAP1, which function to cleave the initiator methionine from polypeptides during or after protein translation. Mechanistically, the N-terminal psi-PxLVp motif binds to the C6H2-type zinc finger of inactive form of MAP1. After formation of the docked complex, zinc is transferred from the CXCC motif in the GTPase domain of ZNG1 to the zinc binding site in the peptidase domain of MAP1 in a process requiring GTP hydrolysis. GTP/GDP exchange is required for release of active MAP1. This is Zinc-regulated GTPase metalloprotein activator 1 from Saccharomyces cerevisiae (strain ATCC 204508 / S288c) (Baker's yeast).